The sequence spans 389 residues: Xylose isomerase (389 aa).

Residues H54 and D57 contribute to the active site. Mg(2+) is bound by residues E181, E217, H220, D245, D255, D257, and D287.

It belongs to the xylose isomerase family. In terms of assembly, homotetramer. The cofactor is Mg(2+).

It is found in the cytoplasm. The enzyme catalyses alpha-D-xylose = alpha-D-xylulofuranose. Functionally, involved in D-xylose catabolism. This is Xylose isomerase (xylA) from Streptomyces violaceusniger.